We begin with the raw amino-acid sequence, 96 residues long: Protein C4 (96 aa).

Residue G2 is the site of N-myristoyl glycine; by host attachment. A disordered region spans residues 66-96 (STDDLQGEDSRQPMTLTPRQLTQEVSRRLLM). Over residues 77-89 (QPMTLTPRQLTQE) the composition is skewed to polar residues.

This sequence belongs to the geminiviridae protein AC4/C4 family.

It is found in the host cell membrane. Its function is as follows. Pathogenicity determinant. May act as a suppressor of RNA-mediated gene silencing, also known as post-transcriptional gene silencing (PTGS), a mechanism of plant viral defense that limits the accumulation of viral RNAs. This is Protein C4 from Cynanchum acutum (Tomato).